The chain runs to 320 residues: Taste receptor type 2 member 129 (320 aa).

Topologically, residues 1–8 (MDGIVQNM) are extracellular. The helical transmembrane segment at 9 to 29 (FTFIVIVEIIIGWIGNGFIAL) threads the bilayer. The Cytoplasmic segment spans residues 30–55 (VNCIHWYKRRKISALNQILTALAFSR). Residues 56 to 76 (IYLLLTVFTVIAVSTLYTHVL) form a helical membrane-spanning segment. The Extracellular portion of the chain corresponds to 77–88 (VTRRVVKLINFH). A helical membrane pass occupies residues 89–109 (LLFSNHFSMWLAACLGLYYFL). The Cytoplasmic portion of the chain corresponds to 110 to 128 (KIAHFPNSIFVYLKMRINQ). A helical transmembrane segment spans residues 129–149 (VVSGTLLMSLGLLFLNTLLIN). At 150–185 (SYIDTKIDDYREHLLYDFTSNNTASFYRVILVINNC) the chain is on the extracellular side. Residue Asn170 is glycosylated (N-linked (GlcNAc...) asparagine). A helical transmembrane segment spans residues 186–206 (IFTSIPFTLSQSTFLLLIFSL). Over 207 to 233 (WRHYKKMQQHAQRCRDVLADAHIRVLQ) the chain is Cytoplasmic. The helical transmembrane segment at 234-254 (TMVTYVLLCAIFFLSLSMQIL) threads the bilayer. Topologically, residues 255–264 (RSELLKNILY) are extracellular. A helical membrane pass occupies residues 265–285 (VRFCEIVAAVFPSGHSCVLIC). At 286–320 (RDTNLRGTFLSVLSWLKQRFTSWIPNINCRSSCIF) the chain is on the cytoplasmic side.

Belongs to the G-protein coupled receptor T2R family.

Its subcellular location is the membrane. Functionally, putative taste receptor which may play a role in the perception of bitterness. The protein is Taste receptor type 2 member 129 of Mus musculus (Mouse).